The following is an 882-amino-acid chain: Alanine--tRNA ligase (882 aa).

Residues H570, H574, C672, and H676 each contribute to the Zn(2+) site.

This sequence belongs to the class-II aminoacyl-tRNA synthetase family. It depends on Zn(2+) as a cofactor.

Its subcellular location is the cytoplasm. It carries out the reaction tRNA(Ala) + L-alanine + ATP = L-alanyl-tRNA(Ala) + AMP + diphosphate. Its function is as follows. Catalyzes the attachment of alanine to tRNA(Ala) in a two-step reaction: alanine is first activated by ATP to form Ala-AMP and then transferred to the acceptor end of tRNA(Ala). Also edits incorrectly charged Ser-tRNA(Ala) and Gly-tRNA(Ala) via its editing domain. This Xanthomonas axonopodis pv. citri (strain 306) protein is Alanine--tRNA ligase.